We begin with the raw amino-acid sequence, 933 residues long: Progesterone receptor (933 aa).

Residues 1-157 (MTELKAKGPR…PEDPPAAPAT (157 aa)) are disordered. Residues 1 to 164 (MTELKAKGPR…PATQRVLSPL (164 aa)) form an AF3; mediates transcriptional activation (in isoform B) region. The tract at residues 1 to 566 (MTELKAKGPR…YSFESLPQKI (566 aa)) is modulating, Pro-Rich. A Glycyl lysine isopeptide (Lys-Gly) (interchain with G-Cter in SUMO) cross-link involves residue lysine 7. At serine 20 the chain carries Phosphoserine. An LXXL motif 1 motif is present at residues 55 to 59 (LDGLL). Phosphoserine occurs at positions 81 and 102. The LXXL motif 2 motif lies at 115-119 (LDTLL). A phosphoserine mark is found at serine 130 and serine 162. The tract at residues 165–305 (MSRSGCKVGD…LATTVMDFIH (141 aa)) is mediates transcriptional transrepression (in isoform A). A Nuclear localization signal motif is present at residues 183–187 (KVLPR). Serine 190 and serine 213 each carry phosphoserine. The segment at 195 to 241 (LLLPASESPHWSGAPVKPSPQAAAVEVEEEDGSESEESAGPLLKGKP) is disordered. Acidic residues predominate over residues 220–231 (EVEEEDGSESEE). Residues 232-241 (SAGPLLKGKP) are compositionally biased toward low complexity. A Phosphoserine; by MAPK1 modification is found at serine 294. A disordered region spans residues 331–351 (GGAGAASAFAPPRSSPCASST). Low complexity predominate over residues 335–350 (AASAFAPPRSSPCASS). At serine 345 the chain carries Phosphoserine; by MAPK. Residue lysine 388 forms a Glycyl lysine isopeptide (Lys-Gly) (interchain with G-Cter in SUMO); alternate linkage. Residue lysine 388 forms a Glycyl lysine isopeptide (Lys-Gly) (interchain with G-Cter in ubiquitin); alternate linkage. At serine 400 the chain carries Phosphoserine; by CDK2. Residues 415-452 (PDFPLGPPPPLPPRATPSRPGEAAVTAAPASASVSSAS) are disordered. Residues 418-429 (PLGPPPPLPPRA) are compositionally biased toward pro residues. The span at 430–452 (TPSRPGEAAVTAAPASASVSSAS) shows a compositional bias: low complexity. Residues 456 to 546 (STLECILYKA…VYPPYLNYLR (91 aa)) form an AF1; mediates transcriptional activation region. Lysine 531 is covalently cross-linked (Glycyl lysine isopeptide (Lys-Gly) (interchain with G-Cter in SUMO)). 2 NR C4-type zinc fingers span residues 567–587 (CLIC…CGSC) and 603–627 (CAGR…LRKC). The nuclear receptor DNA-binding region spans 567 to 639 (CLICGDEASG…AGMVLGGRKF (73 aa)). Serine 676 carries the phosphoserine modification. The region spanning 679–913 (QDIQLIPPLI…EFPEMMSEVI (235 aa)) is the NR LBD domain. The AF2; mediates transcriptional activation stretch occupies residues 687–933 (LINLLMSIEP…MVKPLLFHKK (247 aa)). Arginine 766 serves as a coordination point for progesterone.

It belongs to the nuclear hormone receptor family. NR3 subfamily. In terms of assembly, interacts with SMARD1 and UNC45A. Interacts with CUEDC2; the interaction promotes ubiquitination, decreases sumoylation, and represses transcriptional activity. Interacts with PIAS3; the interaction promotes sumoylation of PR in a hormone-dependent manner, inhibits DNA-binding, and alters nuclear export. Interacts with SP1; the interaction requires ligand-induced phosphorylation on Ser-345 by ERK1/2 MAPK. Interacts with PRMT2. Isoform A interacts with NCOR2. Isoform B (but not isoform A) interacts with NCOA2 and NCOA1. Isoform B (but not isoform A) interacts with KLF9. Interacts with GTF2B. Post-translationally, phosphorylated on multiple serine sites. Several of these sites are hormone-dependent. Phosphorylation on Ser-294 occurs preferentially on isoform B, is highly hormone-dependent and modulates ubiquitination and sumoylation on Lys-388. Phosphorylation on Ser-102 and Ser-345 also requires induction by hormone. Basal phosphorylation on Ser-81, Ser-162, Ser-190 and Ser-400 is increased in response to progesterone and can be phosphorylated in vitro by the CDK2-A1 complex. Increased levels of phosphorylation on Ser-400 also in the presence of EGF, heregulin, IGF, PMA and FBS. Phosphorylation at this site by CDK2 is ligand-independent, and increases nuclear translocation and transcriptional activity. Phosphorylation at Ser-162 and Ser-294, but not at Ser-190, is impaired during the G(2)/M phase of the cell cycle. Phosphorylation on Ser-345 by ERK1/2 MAPK is required for interaction with SP1. Sumoylation is hormone-dependent and represses transcriptional activity. Sumoylation on all three sites is enhanced by PIAS3. Desumoylated by SENP1. Sumoylation on Lys-388, the main site of sumoylation, is repressed by ubiquitination on the same site, and modulated by phosphorylation at Ser-294. In terms of processing, ubiquitination is hormone-dependent and represses sumoylation on the same site. Promoted by MAPK-mediated phosphorylation on Ser-294. Ubiquitinated by UBR5, leading to its degradation: UBR5 specifically recognizes and binds ligand-bound PGR when it is not associated with coactivators (NCOAs). In presence of NCOAs, the UBR5-degron is not accessible, preventing its ubiquitination and degradation. Post-translationally, palmitoylated by ZDHHC7 and ZDHHC21. Palmitoylation is required for plasma membrane targeting and for rapid intracellular signaling via ERK and AKT kinases and cAMP generation. In terms of tissue distribution, in reproductive tissues the expression of isoform A and isoform B varies as a consequence of developmental and hormonal status. Isoform A and isoform B are expressed in comparable levels in uterine glandular epithelium during the proliferative phase of the menstrual cycle. Expression of isoform B but not of isoform A persists in the glands during mid-secretory phase. In the stroma, isoform A is the predominant form throughout the cycle. Heterogeneous isoform expression between the glands of the endometrium basalis and functionalis is implying region-specific responses to hormonal stimuli.

It is found in the nucleus. It localises to the cytoplasm. Its subcellular location is the mitochondrion outer membrane. The steroid hormones and their receptors are involved in the regulation of eukaryotic gene expression and affect cellular proliferation and differentiation in target tissues. Depending on the isoform, progesterone receptor functions as a transcriptional activator or repressor. In terms of biological role, ligand-dependent transdominant repressor of steroid hormone receptor transcriptional activity including repression of its isoform B, MR and ER. Transrepressional activity may involve recruitment of corepressor NCOR2. Functionally, transcriptional activator of several progesteron-dependent promoters in a variety of cell types. Involved in activation of SRC-dependent MAPK signaling on hormone stimulation. Its function is as follows. Increases mitochondrial membrane potential and cellular respiration upon stimulation by progesterone. This chain is Progesterone receptor (PGR), found in Homo sapiens (Human).